The chain runs to 208 residues: uncharacterized protein (208 aa).

Positions M1–A34 are cleaved as a signal peptide.

This is an uncharacterized protein from Sinorhizobium fredii (strain NBRC 101917 / NGR234).